We begin with the raw amino-acid sequence, 700 residues long: Polyphosphate kinase (700 aa).

N45 provides a ligand contact to ATP. Mg(2+) is bound by residues R373 and R403. The 35-residue stretch at 428 to 462 folds into the PLD phosphodiesterase 1 domain; it reads PGMKIHAKLLLITRREEQGFVRYAHIGTGNFHERT. The Phosphohistidine intermediate role is filled by H433. ATP contacts are provided by Y466, R562, and H590. A PLD phosphodiesterase 2 domain is found at 585-615; the sequence is DRFLEHPRVLVVHNDGDPQVFISSADWMERN.

This sequence belongs to the polyphosphate kinase 1 (PPK1) family. Mg(2+) serves as cofactor. Post-translationally, an intermediate of this reaction is the autophosphorylated ppk in which a phosphate is covalently linked to a histidine residue through a N-P bond.

It catalyses the reaction [phosphate](n) + ATP = [phosphate](n+1) + ADP. Its function is as follows. Catalyzes the reversible transfer of the terminal phosphate of ATP to form a long-chain polyphosphate (polyP). In Vibrio vulnificus (strain CMCP6), this protein is Polyphosphate kinase.